The following is a 1265-amino-acid chain: Guanine nucleotide exchange factor SDC25 (1265 aa).

The region spanning 26-97 (QPIDVVECTY…PPSFTRSILN (72 aa)) is the SH3 domain. Disordered stretches follow at residues 409-454 (IPAS…DTIW) and 623-648 (LNLD…DEYE). Over residues 416-428 (TSCSSETSHHSPS) the composition is skewed to low complexity. One can recognise an N-terminal Ras-GEF domain in the interval 782 to 914 (SNNRIKGGSK…LLKEVNQKFK (133 aa)). In terms of domain architecture, Ras-GEF spans 952 to 1199 (DPVLFATQLT…YQLSLIIEPK (248 aa)). Residues 1201 to 1252 (RKKVVPNSNSNNKSQEKSRDDQTDEGKTSTKKDRFSKFQLHKTKKKAPKVSK) are disordered. The segment covering 1214–1236 (SQEKSRDDQTDEGKTSTKKDRFS) has biased composition (basic and acidic residues). The span at 1239–1252 (QLHKTKKKAPKVSK) shows a compositional bias: basic residues.

Promotes the exchange of Ras-bound GDP by GTP. This is Guanine nucleotide exchange factor SDC25 (SDC25) from Saccharomyces cerevisiae (strain AWRI1631) (Baker's yeast).